An 82-amino-acid chain; its full sequence is Omega-conotoxin-like TxMKLT1-031 (82 aa).

The signal sequence occupies residues 1 to 22 (MKLTCMMIVAVLFLTAWTLVMA). A propeptide spanning residues 23-49 (DDSNNGLANLFSKSRDEMEDPEASKLE) is cleaved from the precursor. 3 disulfide bridges follow: cysteine 53–cysteine 71, cysteine 60–cysteine 76, and cysteine 70–cysteine 81.

It belongs to the conotoxin O1 superfamily. Expressed by the venom duct.

Its subcellular location is the secreted. Functionally, omega-conotoxins act at presynaptic membranes, they bind and block voltage-gated calcium channels (Cav). The chain is Omega-conotoxin-like TxMKLT1-031 from Conus textile (Cloth-of-gold cone).